The sequence spans 165 residues: MRTPIVEKVIVHMGVGESGQHLVNAEDILRNITGQEVVRCFAKRTLPAFSIKKNEPIGCKVTLRGQKAQEFLETALGIVEKTLNRSQFDSFGNVSFGIEEHTDFPGMRYDPNIGVFGMDVTVVLKRPGERICKRRIAARKIPAGHRVTVDDAIAFLNESYGVEVM.

This sequence belongs to the universal ribosomal protein uL5 family. In terms of assembly, part of the 50S ribosomal subunit; contacts the 5S rRNA and probably tRNA. Forms a bridge to the 30S subunit in the 70S ribosome.

Its function is as follows. This is one of the proteins that bind and probably mediate the attachment of the 5S RNA into the large ribosomal subunit, where it forms part of the central protuberance. In the 70S ribosome it contacts protein S13 of the 30S subunit (bridge B1b), connecting the 2 subunits; this bridge is implicated in subunit movement. May contact the P site tRNA; the 5S rRNA and some of its associated proteins might help stabilize positioning of ribosome-bound tRNAs. This chain is Large ribosomal subunit protein uL5, found in Methanosarcina acetivorans (strain ATCC 35395 / DSM 2834 / JCM 12185 / C2A).